Reading from the N-terminus, the 105-residue chain is uncharacterized protein (105 aa).

A disordered region spans residues 22-105 (GSAGHGATEA…KKRIIKGKVM (84 aa)). Residues 61–83 (HDSRPARGDARKRHCQENNKTDR) are compositionally biased toward basic and acidic residues. The span at 93-105 (NRRKKRIIKGKVM) shows a compositional bias: basic residues.

This is an uncharacterized protein from Escherichia coli (strain K12).